Reading from the N-terminus, the 215-residue chain is Charged multivesicular body protein 5 (215 aa).

The stretch at 29 to 81 forms a coiled coil; sequence QMDEKINGLNQELLAYDKQIKATRPGPAQNAIKQKAIRVLQQKKMYERQRDQM. Residues 186 to 215 form a disordered region; that stretch reads TPSVPTTDPHQSSVDEYGLPIGQEASQQVV. Residues 188-199 are compositionally biased toward polar residues; that stretch reads SVPTTDPHQSSV.

The protein belongs to the SNF7 family. Probable peripherally associated component of the endosomal sorting required for transport complex III (ESCRT-III).

The protein localises to the endosome membrane. Its function is as follows. Probable peripherally associated component of the endosomal sorting required for transport complex III (ESCRT-III) which is involved in multivesicular bodies (MVBs) formation and sorting of endosomal cargo proteins into MVBs. MVBs contain intraluminal vesicles (ILVs) that are generated by invagination and scission from the limiting membrane of the endosome and are delivered to lysosomes enabling degradation of membrane proteins. In Dictyostelium discoideum (Social amoeba), this protein is Charged multivesicular body protein 5 (chmp5).